Here is a 269-residue protein sequence, read N- to C-terminus: Putative hydro-lyase Atu3911 (269 aa).

Belongs to the D-glutamate cyclase family.

The protein is Putative hydro-lyase Atu3911 of Agrobacterium fabrum (strain C58 / ATCC 33970) (Agrobacterium tumefaciens (strain C58)).